A 306-amino-acid chain; its full sequence is Agmatinase (306 aa).

Residues histidine 126, aspartate 149, histidine 151, aspartate 153, aspartate 230, and aspartate 232 each contribute to the Mn(2+) site.

This sequence belongs to the arginase family. Agmatinase subfamily. Mn(2+) is required as a cofactor.

The catalysed reaction is agmatine + H2O = urea + putrescine. The protein operates within amine and polyamine biosynthesis; putrescine biosynthesis via agmatine pathway; putrescine from agmatine: step 1/1. Functionally, catalyzes the formation of putrescine from agmatine. The protein is Agmatinase of Shigella sonnei (strain Ss046).